The chain runs to 441 residues: tRNA(Ile)-lysidine synthase (441 aa).

Position 27–32 (27–32) interacts with ATP; that stretch reads SGGVDS.

Belongs to the tRNA(Ile)-lysidine synthase family.

Its subcellular location is the cytoplasm. The enzyme catalyses cytidine(34) in tRNA(Ile2) + L-lysine + ATP = lysidine(34) in tRNA(Ile2) + AMP + diphosphate + H(+). Its function is as follows. Ligates lysine onto the cytidine present at position 34 of the AUA codon-specific tRNA(Ile) that contains the anticodon CAU, in an ATP-dependent manner. Cytidine is converted to lysidine, thus changing the amino acid specificity of the tRNA from methionine to isoleucine. This Proteus mirabilis (strain HI4320) protein is tRNA(Ile)-lysidine synthase.